Consider the following 176-residue polypeptide: Putative L,D-transpeptidase YqjB (176 aa).

The first 25 residues, 1–25 (MRFFLCSIFMMISPIWPLGENPLPG), serve as a signal peptide directing secretion. Residues 27-151 (PYVIVNKRTN…IPVGTRVLIT (125 aa)) form the L,D-TPase catalytic domain. His-111 serves as the catalytic Proton donor/acceptor. Cys-127 acts as the Nucleophile in catalysis.

This sequence belongs to the YkuD family.

It functions in the pathway cell wall biogenesis; peptidoglycan biosynthesis. The chain is Putative L,D-transpeptidase YqjB (yqjB) from Bacillus subtilis (strain 168).